The chain runs to 473 residues: MPTHLVWFRRDLRLQDNLALAAACRDASARVLALYISTPAQWQAHDMAPRQAAFISAQLNALQTALAEKGIPLLFHEVADFNASIETVKNVCRQHDVSHLFYNYQYEFNERQRDAAVEKTLPSVICEGFDDSVILAPGAVMTGNHEMYKVFTPFKNAWLKRLKEDIPPCVPAPKIRVSGALSTPLTPVSLNYPQQAFDAALFPVEENAVIAQLRQFCAQGADEYALRRDFPAVDGTSRLSASLATGGLSPRQCLHRLLAEQPQALDGGPGSVWLNELIWREFYRHLMTWYPALCKHQPFIRWTKRVAWQENPHYFQAWQKGETGYPIVDAAMRQLNATGWMHNRLRMITASFLVKDLLIDWRLGERYFMSQLIDGDLAANNGGWQWAASTGTDAAPYFRIFNPTTQGERFDRDGEFIRQWLPALRDIPGKAIHEPWRWAEKAGVVLDYPRPIVEHKQARIATLSAYEAARKGA.

Residues 2 to 134 (PTHLVWFRRD…ICEGFDDSVI (133 aa)) enclose the Photolyase/cryptochrome alpha/beta domain. N109 and E110 together coordinate (6R)-5,10-methylene-5,6,7,8-tetrahydrofolate. Y224 is an FAD binding site. Residue R228 coordinates DNA. 236–240 (TSRLS) lines the FAD pocket. Interaction with DNA stretches follow at residues 276–283 (ELIWREFY) and 343–344 (NR). 374 to 376 (DGD) lines the FAD pocket. A DNA-binding site is contributed by Q406.

It belongs to the DNA photolyase class-1 family. Monomer. FAD is required as a cofactor. (6R)-5,10-methylene-5,6,7,8-tetrahydrofolate serves as cofactor.

It carries out the reaction cyclobutadipyrimidine (in DNA) = 2 pyrimidine residues (in DNA).. Involved in repair of UV radiation-induced DNA damage. Catalyzes the light-dependent monomerization (300-600 nm) of cyclobutyl pyrimidine dimers (in cis-syn configuration), which are formed between adjacent bases on the same DNA strand upon exposure to ultraviolet radiation. This chain is Deoxyribodipyrimidine photo-lyase (phrB), found in Salmonella typhimurium (strain LT2 / SGSC1412 / ATCC 700720).